Reading from the N-terminus, the 217-residue chain is PTB-containing, cubilin and LRP1-interacting protein (217 aa).

The PID domain occupies 60–217; sequence VTYLGKVSTT…ASQELESDDG (158 aa). The disordered stretch occupies residues 194 to 217; that stretch reads KSDGRIHRSSSSEEASQELESDDG. 3 positions are modified to phosphoserine: Ser-202, Ser-203, and Ser-214. Over residues 208–217 the composition is skewed to acidic residues; the sequence is ASQELESDDG.

As to quaternary structure, found in a complex with PID1/PCLI1, LRP1 and CUBNI. Interacts with LRP1 and CUBN.

Its subcellular location is the cytoplasm. Its function is as follows. Increases proliferation of preadipocytes without affecting adipocytic differentiation. This chain is PTB-containing, cubilin and LRP1-interacting protein (Pid1), found in Mus musculus (Mouse).